The following is a 172-amino-acid chain: Small ribosomal subunit protein uS5 (172 aa).

The region spanning 17–80 is the S5 DRBM domain; the sequence is LKEKMIQVNR…DAARRDMVKV (64 aa).

This sequence belongs to the universal ribosomal protein uS5 family. Part of the 30S ribosomal subunit. Contacts proteins S4 and S8.

Functionally, with S4 and S12 plays an important role in translational accuracy. Its function is as follows. Located at the back of the 30S subunit body where it stabilizes the conformation of the head with respect to the body. The polypeptide is Small ribosomal subunit protein uS5 (Methylibium petroleiphilum (strain ATCC BAA-1232 / LMG 22953 / PM1)).